Reading from the N-terminus, the 161-residue chain is Nucleotide-binding protein Bmul_0741/BMULJ_02519 (161 aa).

This sequence belongs to the YajQ family.

Functionally, nucleotide-binding protein. The protein is Nucleotide-binding protein Bmul_0741/BMULJ_02519 of Burkholderia multivorans (strain ATCC 17616 / 249).